The sequence spans 365 residues: Carbamoyl phosphate synthase small chain (365 aa).

CPSase stretches follow at residues 1 to 166 (MKRQ…PSPG) and 1 to 169 (MKRQ…GRGH). Positions 45, 218, and 220 each coordinate L-glutamine. The region spanning 170 to 357 (RVVLVDFGMK…LTMIENFKKE (188 aa)) is the Glutamine amidotransferase type-1 domain. Residue Cys-245 is the Nucleophile of the active site. L-glutamine contacts are provided by Leu-246, Gln-249, Asn-287, Gly-289, and Tyr-290. Catalysis depends on residues His-330 and Glu-332.

Belongs to the CarA family. As to quaternary structure, composed of two chains; the small (or glutamine) chain promotes the hydrolysis of glutamine to ammonia, which is used by the large (or ammonia) chain to synthesize carbamoyl phosphate. Tetramer of heterodimers (alpha,beta)4.

The enzyme catalyses hydrogencarbonate + L-glutamine + 2 ATP + H2O = carbamoyl phosphate + L-glutamate + 2 ADP + phosphate + 2 H(+). It carries out the reaction L-glutamine + H2O = L-glutamate + NH4(+). Its pathway is amino-acid biosynthesis; L-arginine biosynthesis; carbamoyl phosphate from bicarbonate: step 1/1. It functions in the pathway pyrimidine metabolism; UMP biosynthesis via de novo pathway; (S)-dihydroorotate from bicarbonate: step 1/3. Its function is as follows. Small subunit of the glutamine-dependent carbamoyl phosphate synthetase (CPSase). CPSase catalyzes the formation of carbamoyl phosphate from the ammonia moiety of glutamine, carbonate, and phosphate donated by ATP, constituting the first step of 2 biosynthetic pathways, one leading to arginine and/or urea and the other to pyrimidine nucleotides. The small subunit (glutamine amidotransferase) binds and cleaves glutamine to supply the large subunit with the substrate ammonia. The sequence is that of Carbamoyl phosphate synthase small chain from Bacillus cereus (strain ZK / E33L).